Consider the following 239-residue polypeptide: Ribosomal RNA small subunit methyltransferase G (239 aa).

S-adenosyl-L-methionine-binding positions include Gly78, Phe83, 129–130 (AE), and Arg148.

It belongs to the methyltransferase superfamily. RNA methyltransferase RsmG family.

It is found in the cytoplasm. Specifically methylates the N7 position of a guanine in 16S rRNA. This is Ribosomal RNA small subunit methyltransferase G from Clostridium botulinum (strain ATCC 19397 / Type A).